The sequence spans 638 residues: MMSDEDNTYSDDEEWLDLDLGLPNNDIKTAPILNSSLLSSAVHGERLIQERPTHDFGDVEATVDRTVEKRSRLKITSVDRKIRLQIHQLHLLCLTYHLCTRNTWCDDNRLNYLVKYIPPGIRVSLHPSSQKSQMIRNKTFLHGLAGLVEVWKRKYKITTNGLRKPNYGLLQNNSLISESLSLEEFCKNSKLLSGSRDYGTQLFASILRNLNVPTRLVFSLQVLSFRFKGAINEASSHEIVPAWSQQMENDSSSDISESAHITSRFRKRRKIIQPSFSNLSHLDASDIVTEDTKLKVIDSPKPVFWVEAFNKAMQKWVCVDPFGDASVIGKYRRFEPASSDHLNQMTYVFAIEANGYVKDVTRKYCLHYYKILKNRVEIFPFGKAWMNRIFSKIGKPRDFYNDMDAIEDAELLRLEQSEGIPRNIQDLKDHPLFVLERHLKKNQAIKTGKSCGRINTKNGVELVYPRKYVSNGFSAEHWYRKGRIIKPGAQPLKHVKNGDKVLPLYDEEATQLYTPKPVVANIVPKNAYGNIDLYVPSMLPYGAYHCRKRCALAAAKFLEIDYAKAVVGFDFQRKYSKPKLEGVVVSKRYEEAIDLIAEEIDQEEKEAEARNVRKTCLLLWKRLITGLRIRQRVFEEYG.

It belongs to the XPC family.

The protein localises to the nucleus. Has a role in the nucleotide excision repair (NER) pathway. Acts in both transcription-coupled repair (TCR) which removes damage from the transcribed strand of active genes and in global genome repair (GGR) which removes damage in untranscribed DNA. Involved in the repair of UV-induced damages where it is involved in the removal of cyclobutane pyrimidine dimers (CPDs). The sequence is that of DNA repair protein rhp41 (rhp41) from Schizosaccharomyces pombe (strain 972 / ATCC 24843) (Fission yeast).